The following is a 363-amino-acid chain: Type 3 secretion system translocon protein SctB (363 aa).

Residues M1–I16 are compositionally biased toward polar residues. Residues M1–S30 form a disordered region. The span at S17 to S30 shows a compositional bias: low complexity. The segment at Y33–I73 is ipgC chaperone binding domain. The chain crosses the membrane as a helical span at residues I99–L120.

It belongs to the SctB/SipC family. As to quaternary structure, the core secretion machinery of the T3SS is composed of approximately 20 different proteins, including cytoplasmic components, a base, an export apparatus and a needle. This subunit is involved in the formation of a pore, called the translocon, in host membrane. Interacts with IpaB/SctE. Interacts with the molecular chaperone IpgC, which prevents premature association with IpaB/SctE within the cytoplasm of Shigella cells. Does not interact with CDC42 or RAC1 GTPases in vitro.

The protein localises to the secreted. It localises to the host membrane. Its activity is regulated as follows. Interaction with the membrane is affected by the pH. Component of the type III secretion system (T3SS), also called injectisome, which is used to inject bacterial effector proteins into eukaryotic host cells. IpaB/SctE and IpaC/SctB are inserted into the host membrane where they form a pore and allow the translocation of effector proteins into the cytosol of target cells. Induction and secretion of IpaC/SctB comprise the final step in triggering the induction of full type III secretion. In terms of biological role, required for efficient dissemination. Necessary for lysis of the two cellular membranes that surround bacteria in protrusions during cell-to-cell spread. Contribute to actin nucleation in vitro, which may be a necessary step in Shigella invasion. This is Type 3 secretion system translocon protein SctB from Shigella flexneri.